We begin with the raw amino-acid sequence, 169 residues long: Protein AIG2 B (169 aa).

Substrate is bound at residue 15-20 (YGSFQE). Glu83 functions as the Proton acceptor in the catalytic mechanism.

It belongs to the gamma-glutamylcyclotransferase family. Expressed in roots, leaves and stems.

In terms of biological role, putative gamma-glutamylcyclotransferase. The chain is Protein AIG2 B from Arabidopsis thaliana (Mouse-ear cress).